The chain runs to 164 residues: uncharacterized protein (164 aa).

Residues 1–18 (MILILTIIVGFLIYFVTA) form the signal peptide. Asparagine 88 is a glycosylation site (N-linked (GlcNAc...) asparagine; by host).

The protein belongs to the IIV-6 357R family.

This is an uncharacterized protein from Acheta domesticus (House cricket).